The primary structure comprises 429 residues: 3-phosphoshikimate 1-carboxyvinyltransferase (429 aa).

3-phosphoshikimate contacts are provided by lysine 22, serine 23, and arginine 27. Phosphoenolpyruvate is bound at residue lysine 22. Residues glycine 93 and arginine 122 each contribute to the phosphoenolpyruvate site. 6 residues coordinate 3-phosphoshikimate: serine 168, serine 169, glutamine 170, serine 196, aspartate 311, and lysine 338. Phosphoenolpyruvate is bound at residue glutamine 170. The Proton acceptor role is filled by aspartate 311. Arginine 342 and arginine 384 together coordinate phosphoenolpyruvate.

This sequence belongs to the EPSP synthase family. As to quaternary structure, monomer.

Its subcellular location is the cytoplasm. It carries out the reaction 3-phosphoshikimate + phosphoenolpyruvate = 5-O-(1-carboxyvinyl)-3-phosphoshikimate + phosphate. It functions in the pathway metabolic intermediate biosynthesis; chorismate biosynthesis. Functionally, catalyzes the transfer of the enolpyruvyl moiety of phosphoenolpyruvate (PEP) to the 5-hydroxyl of shikimate-3-phosphate (S3P) to produce enolpyruvyl shikimate-3-phosphate and inorganic phosphate. This Methanocaldococcus jannaschii (strain ATCC 43067 / DSM 2661 / JAL-1 / JCM 10045 / NBRC 100440) (Methanococcus jannaschii) protein is 3-phosphoshikimate 1-carboxyvinyltransferase.